We begin with the raw amino-acid sequence, 169 residues long: Small ribosomal subunit protein uS5 (169 aa).

The S5 DRBM domain occupies 15 to 79; it reads LKEQVVAINR…EAAKKNLRRI (65 aa).

Belongs to the universal ribosomal protein uS5 family. Part of the 30S ribosomal subunit. Contacts proteins S4 and S8.

Its function is as follows. With S4 and S12 plays an important role in translational accuracy. Located at the back of the 30S subunit body where it stabilizes the conformation of the head with respect to the body. In Solibacter usitatus (strain Ellin6076), this protein is Small ribosomal subunit protein uS5.